The primary structure comprises 249 residues: Domoic acid biosynthesis cluster protein B (249 aa).

Functionally, unknown function: part of the gene cluster that mediates the biosynthesis of domoic acid (DA) and derivatives, natural products with neurochemical activity acting as ionotropic glutamate receptor (iGluR) agonists, thus being neurotoxins causing amnesic shellfish poisoning (ASP). In Pseudo-nitzschia multiseries (Marine planktonic diatom), this protein is Domoic acid biosynthesis cluster protein B.